The following is a 128-amino-acid chain: MEIGKKYELNPHRIKSFIDISSSNANMVGIIQENGGWFEVKSISSLDGFDYVTEIICANGEIYNDDGMGDDYFELSEEEFYCFREYKEPTSEEDEVKDKVSGVTKIHCIVDENNVDEIIELLRKTFKK.

This is an uncharacterized protein from Escherichia coli (Bacteriophage T6).